The primary structure comprises 351 residues: MTIAIGQNQERGVFDLVDDWLKRDRFVFVGWSGLLLFPTAYLAVGGWFTGTTFVTSWYTHGLASSYLEGCNFLTAAVSTPANSMGHSLILLWGPEAQGDFTRWCQIGGLWTFVALHGAFGLIGFCLRQFEIARLVGIRPYNAIAFSGPISIFVSVFLLYPLGQASWFFAPSFGVAAIFRFLLFLQGFHNWTLNPFHMMGVAGILGGALLCAIHGATVENTLFEDGDAANTFRAFTPTQSEETYSMVTANRFWSQIFGVAFSNKRWLHFFMLFVPVTGLWTSAIGIVGLALNLRAYDFVSQELRAAEDPEFETFYTKNILLNEGIRAWMAAQDQPHENFVFPEEVLPRGNAL.

The chain crosses the membrane as a helical span at residues 39–59; it reads TAYLAVGGWFTGTTFVTSWYT. Residue His-116 coordinates chlorophyll a. A helical transmembrane segment spans residues 123–139; that stretch reads GFCLRQFEIARLVGIRP. Pheophytin a is bound by residues Gln-128 and Asn-141. Residues 151 to 164 traverse the membrane as a helical segment; it reads IFVSVFLLYPLGQA. His-196 lines the chlorophyll a pocket. A helical membrane pass occupies residues 206-226; that stretch reads GALLCAIHGATVENTLFEDGD. Residues His-213 and Phe-260 each contribute to the a plastoquinone site. His-213 is a Fe cation binding site. His-267 provides a ligand contact to Fe cation. Residues 277-293 form a helical membrane-spanning segment; that stretch reads GLWTSAIGIVGLALNLR.

This sequence belongs to the reaction center PufL/M/PsbA/D family. As to quaternary structure, PSII is composed of 1 copy each of membrane proteins PsbA, PsbB, PsbC, PsbD, PsbE, PsbF, PsbH, PsbI, PsbJ, PsbK, PsbL, PsbM, PsbT, PsbX, PsbY, PsbZ, Psb30/Ycf12, at least 3 peripheral proteins of the oxygen-evolving complex and a large number of cofactors. It forms dimeric complexes. The cofactor is The D1/D2 heterodimer binds P680, chlorophylls that are the primary electron donor of PSII, and subsequent electron acceptors. It shares a non-heme iron and each subunit binds pheophytin, quinone, additional chlorophylls, carotenoids and lipids. There is also a Cl(-1) ion associated with D1 and D2, which is required for oxygen evolution. The PSII complex binds additional chlorophylls, carotenoids and specific lipids..

It is found in the plastid. It localises to the chloroplast thylakoid membrane. The enzyme catalyses 2 a plastoquinone + 4 hnu + 2 H2O = 2 a plastoquinol + O2. Functionally, photosystem II (PSII) is a light-driven water:plastoquinone oxidoreductase that uses light energy to abstract electrons from H(2)O, generating O(2) and a proton gradient subsequently used for ATP formation. It consists of a core antenna complex that captures photons, and an electron transfer chain that converts photonic excitation into a charge separation. The D1/D2 (PsbA/PsbD) reaction center heterodimer binds P680, the primary electron donor of PSII as well as several subsequent electron acceptors. D2 is needed for assembly of a stable PSII complex. This Heterosigma akashiwo (strain NIES-293 / 8280G21-1) protein is Photosystem II D2 protein.